The following is a 201-amino-acid chain: Probable molybdenum cofactor guanylyltransferase (201 aa).

GTP-binding positions include 6–8 (LAG), lysine 18, aspartate 65, and aspartate 97. Aspartate 97 is a binding site for Mg(2+).

It belongs to the MobA family. Mg(2+) serves as cofactor.

It is found in the cytoplasm. The catalysed reaction is Mo-molybdopterin + GTP + H(+) = Mo-molybdopterin guanine dinucleotide + diphosphate. Functionally, transfers a GMP moiety from GTP to Mo-molybdopterin (Mo-MPT) cofactor (Moco or molybdenum cofactor) to form Mo-molybdopterin guanine dinucleotide (Mo-MGD) cofactor. In Staphylococcus epidermidis (strain ATCC 35984 / DSM 28319 / BCRC 17069 / CCUG 31568 / BM 3577 / RP62A), this protein is Probable molybdenum cofactor guanylyltransferase.